Reading from the N-terminus, the 297-residue chain is 3-methyl-2-oxobutanoate hydroxymethyltransferase (297 aa).

Positions 1 to 15 (MSEQISEQSEQNVYG) are enriched in polar residues. Residues 1 to 40 (MSEQISEQSEQNVYGASSPVPAGESSPSAASAPRTKVRTH) are disordered. Low complexity predominate over residues 16-33 (ASSPVPAGESSPSAASAP). Mg(2+) contacts are provided by Asp-78 and Asp-117. 3-methyl-2-oxobutanoate contacts are provided by residues 78–79 (DS), Asp-117, and Lys-147. Residue Glu-149 coordinates Mg(2+). Glu-215 serves as the catalytic Proton acceptor.

It belongs to the PanB family. In terms of assembly, homodecamer; pentamer of dimers. It depends on Mg(2+) as a cofactor.

The protein localises to the cytoplasm. The enzyme catalyses 3-methyl-2-oxobutanoate + (6R)-5,10-methylene-5,6,7,8-tetrahydrofolate + H2O = 2-dehydropantoate + (6S)-5,6,7,8-tetrahydrofolate. The protein operates within cofactor biosynthesis; (R)-pantothenate biosynthesis; (R)-pantoate from 3-methyl-2-oxobutanoate: step 1/2. In terms of biological role, catalyzes the reversible reaction in which hydroxymethyl group from 5,10-methylenetetrahydrofolate is transferred onto alpha-ketoisovalerate to form ketopantoate. The polypeptide is 3-methyl-2-oxobutanoate hydroxymethyltransferase (Mycobacterium marinum (strain ATCC BAA-535 / M)).